Consider the following 211-residue polypeptide: Imidazole glycerol phosphate synthase subunit HisH (211 aa).

A Glutamine amidotransferase type-1 domain is found at 4–211 (RVVILDYGSG…QLLANWVATL (208 aa)). Cysteine 82 functions as the Nucleophile in the catalytic mechanism. Residues histidine 192 and glutamate 194 contribute to the active site.

As to quaternary structure, heterodimer of HisH and HisF.

The protein resides in the cytoplasm. It carries out the reaction 5-[(5-phospho-1-deoxy-D-ribulos-1-ylimino)methylamino]-1-(5-phospho-beta-D-ribosyl)imidazole-4-carboxamide + L-glutamine = D-erythro-1-(imidazol-4-yl)glycerol 3-phosphate + 5-amino-1-(5-phospho-beta-D-ribosyl)imidazole-4-carboxamide + L-glutamate + H(+). The catalysed reaction is L-glutamine + H2O = L-glutamate + NH4(+). The protein operates within amino-acid biosynthesis; L-histidine biosynthesis; L-histidine from 5-phospho-alpha-D-ribose 1-diphosphate: step 5/9. In terms of biological role, IGPS catalyzes the conversion of PRFAR and glutamine to IGP, AICAR and glutamate. The HisH subunit catalyzes the hydrolysis of glutamine to glutamate and ammonia as part of the synthesis of IGP and AICAR. The resulting ammonia molecule is channeled to the active site of HisF. In Thermobifida fusca (strain YX), this protein is Imidazole glycerol phosphate synthase subunit HisH.